The following is a 159-amino-acid chain: Ribosome maturation factor RimP (159 aa).

This sequence belongs to the RimP family.

It is found in the cytoplasm. Its function is as follows. Required for maturation of 30S ribosomal subunits. The chain is Ribosome maturation factor RimP from Streptococcus pneumoniae (strain 70585).